A 30-amino-acid polypeptide reads, in one-letter code: DVTFSLLGANTKSYAAFITNFRKDVASEKK.

The protein belongs to the ribosome-inactivating protein family. Type 1 RIP subfamily. Post-translationally, glycosylated.

The enzyme catalyses Endohydrolysis of the N-glycosidic bond at one specific adenosine on the 28S rRNA.. Functionally, inactivates eukaryotic 60S ribosomal subunits. In Momordica cochinchinensis (Spiny bitter cucumber), this protein is Ribosome-inactivating protein momorcochin-S.